A 52-amino-acid polypeptide reads, in one-letter code: MAEERKLYMCMRCGRVFSKPEMEILPGIRCPYCNFKIIMKVRSPTVKRIPAV.

Residues C13, C30, and C33 each coordinate Zn(2+).

Belongs to the archaeal Rpo12/eukaryotic RPC10 RNA polymerase subunit family. As to quaternary structure, part of the RNA polymerase complex. Requires Zn(2+) as cofactor.

The protein resides in the cytoplasm. It carries out the reaction RNA(n) + a ribonucleoside 5'-triphosphate = RNA(n+1) + diphosphate. DNA-dependent RNA polymerase (RNAP) catalyzes the transcription of DNA into RNA using the four ribonucleoside triphosphates as substrates. The polypeptide is DNA-directed RNA polymerase subunit Rpo12 (Pyrobaculum neutrophilum (strain DSM 2338 / JCM 9278 / NBRC 100436 / V24Sta) (Thermoproteus neutrophilus)).